The chain runs to 284 residues: 4-diphosphocytidyl-2-C-methyl-D-erythritol kinase (284 aa).

K14 is a catalytic residue. Position 98 to 108 (98 to 108) interacts with ATP; the sequence is PMGGGIGGGSS. Residue D140 is part of the active site.

Belongs to the GHMP kinase family. IspE subfamily.

The enzyme catalyses 4-CDP-2-C-methyl-D-erythritol + ATP = 4-CDP-2-C-methyl-D-erythritol 2-phosphate + ADP + H(+). The protein operates within isoprenoid biosynthesis; isopentenyl diphosphate biosynthesis via DXP pathway; isopentenyl diphosphate from 1-deoxy-D-xylulose 5-phosphate: step 3/6. Catalyzes the phosphorylation of the position 2 hydroxy group of 4-diphosphocytidyl-2C-methyl-D-erythritol. The chain is 4-diphosphocytidyl-2-C-methyl-D-erythritol kinase from Shewanella loihica (strain ATCC BAA-1088 / PV-4).